The following is a 481-amino-acid chain: RuvB-like helicase 2 (481 aa).

76 to 83 (GPPSTGKT) is an ATP binding site.

This sequence belongs to the RuvB family. In terms of assembly, may form heterododecamers with hel-1/rvb1. Component of the SWR1 chromatin remodeling complex, the INO80 chromatin remodeling complex, and of the R2TP complex.

The protein localises to the nucleus. The enzyme catalyses ATP + H2O = ADP + phosphate + H(+). DNA helicase which participates in several chromatin remodeling complexes, including the SWR1 and the INO80 complexes. The SWR1 complex mediates the ATP-dependent exchange of histone H2A for the H2A variant H2A.Z leading to transcriptional regulation of selected genes by chromatin remodeling. The INO80 complex remodels chromatin by shifting nucleosomes and is involved in DNA repair. Also involved in pre-rRNA processing. In Neurospora crassa (strain ATCC 24698 / 74-OR23-1A / CBS 708.71 / DSM 1257 / FGSC 987), this protein is RuvB-like helicase 2 (hel-2).